Reading from the N-terminus, the 367-residue chain is Protein-glutamate methylesterase/protein-glutamine glutaminase 1 (367 aa).

Positions 9 to 126 (KVLCVDDSAL…RDGMLDYSEK (118 aa)) constitute a Response regulatory domain. At Asp-60 the chain carries 4-aspartylphosphate. In terms of domain architecture, CheB-type methylesterase spans 168–360 (LVSTEKLIIV…RRIMARLASM (193 aa)). Residues Ser-180, His-206, and Asp-302 contribute to the active site.

It belongs to the CheB family. Post-translationally, phosphorylated by CheA. Phosphorylation of the N-terminal regulatory domain activates the methylesterase activity.

The protein localises to the cytoplasm. The enzyme catalyses [protein]-L-glutamate 5-O-methyl ester + H2O = L-glutamyl-[protein] + methanol + H(+). The catalysed reaction is L-glutaminyl-[protein] + H2O = L-glutamyl-[protein] + NH4(+). Functionally, involved in chemotaxis. Part of a chemotaxis signal transduction system that modulates chemotaxis in response to various stimuli. Catalyzes the demethylation of specific methylglutamate residues introduced into the chemoreceptors (methyl-accepting chemotaxis proteins or MCP) by CheR. Also mediates the irreversible deamidation of specific glutamine residues to glutamic acid. This Burkholderia pseudomallei (strain K96243) protein is Protein-glutamate methylesterase/protein-glutamine glutaminase 1.